Reading from the N-terminus, the 814-residue chain is Phenylalanine--tRNA ligase beta subunit (814 aa).

Positions 39 to 153 (SARAKGVVVG…ELPALGAPVA (115 aa)) constitute a tRNA-binding domain. The B5 domain maps to 414–498 (ADASSVLLRR…RLVGFDRFGA (85 aa)). Residues Asp-476, Asp-482, Glu-485, and Glu-486 each contribute to the Mg(2+) site. One can recognise an FDX-ACB domain in the interval 720 to 813 (PTVPASERDL…LVKQHGAELR (94 aa)).

Belongs to the phenylalanyl-tRNA synthetase beta subunit family. Type 1 subfamily. Tetramer of two alpha and two beta subunits. It depends on Mg(2+) as a cofactor.

Its subcellular location is the cytoplasm. The enzyme catalyses tRNA(Phe) + L-phenylalanine + ATP = L-phenylalanyl-tRNA(Phe) + AMP + diphosphate + H(+). The chain is Phenylalanine--tRNA ligase beta subunit from Parasynechococcus marenigrum (strain WH8102).